We begin with the raw amino-acid sequence, 138 residues long: Putative pre-16S rRNA nuclease (138 aa).

This sequence belongs to the YqgF nuclease family.

It localises to the cytoplasm. Functionally, could be a nuclease involved in processing of the 5'-end of pre-16S rRNA. The sequence is that of Putative pre-16S rRNA nuclease from Klebsiella pneumoniae (strain 342).